Consider the following 447-residue polypeptide: Argininosuccinate synthase (447 aa).

ATP-binding positions include 17 to 25 and alanine 43; that span reads AFSGGLDTS. Tyrosine 99 is an L-citrulline binding site. Residues glycine 129 and threonine 131 each coordinate ATP. The L-aspartate site is built by threonine 131, asparagine 135, and aspartate 136. L-citrulline is bound at residue asparagine 135. Aspartate 136 is an ATP binding site. Arginine 139 and serine 192 together coordinate L-citrulline. ATP is bound at residue aspartate 194. The L-citrulline site is built by threonine 201, glutamate 203, and glutamate 280.

Belongs to the argininosuccinate synthase family. Type 2 subfamily. As to quaternary structure, homotetramer.

The protein resides in the cytoplasm. The enzyme catalyses L-citrulline + L-aspartate + ATP = 2-(N(omega)-L-arginino)succinate + AMP + diphosphate + H(+). It participates in amino-acid biosynthesis; L-arginine biosynthesis; L-arginine from L-ornithine and carbamoyl phosphate: step 2/3. This Klebsiella pneumoniae subsp. pneumoniae (strain ATCC 700721 / MGH 78578) protein is Argininosuccinate synthase.